Here is a 101-residue protein sequence, read N- to C-terminus: Urease subunit beta (101 aa).

This sequence belongs to the urease beta subunit family. As to quaternary structure, heterotrimer of UreA (gamma), UreB (beta) and UreC (alpha) subunits. Three heterotrimers associate to form the active enzyme.

It localises to the cytoplasm. It carries out the reaction urea + 2 H2O + H(+) = hydrogencarbonate + 2 NH4(+). The protein operates within nitrogen metabolism; urea degradation; CO(2) and NH(3) from urea (urease route): step 1/1. This chain is Urease subunit beta, found in Dechloromonas aromatica (strain RCB).